A 336-amino-acid polypeptide reads, in one-letter code: MPRPTSPHPDAERKSASPLHPRNRHLGRYDFPRLIAGSPELERFVILNPYGRQSIDFADPAAVKAFNRALLQQFYDVREWDIPDGYLCPPIPGRADYLHYLADLLGASHDGLIPRGPGLRALDVGTGANCIYPLLGHHEYGWRFVGADIDPQSLASAAAILAANPRFAAAIELRRQPDRRQIFQGLIGVDERFDMTLCNPPFHASLDEATRGSRRKWKNLGKLDPTRTLPLLNFGGQGAELYCEGGEAAFLAGMAEESRAFATQVFWFTTLVSKASNLPNLQERLKTLGASDIRVVDMAQGQKQSRFVAWTYLDKKQRRAWRKERWTAALLEPLGE.

The disordered stretch occupies residues 1 to 24 (MPRPTSPHPDAERKSASPLHPRNR).

This sequence belongs to the methyltransferase superfamily. METTL16/RlmF family.

It is found in the cytoplasm. The enzyme catalyses adenosine(1618) in 23S rRNA + S-adenosyl-L-methionine = N(6)-methyladenosine(1618) in 23S rRNA + S-adenosyl-L-homocysteine + H(+). Functionally, specifically methylates the adenine in position 1618 of 23S rRNA. This chain is Ribosomal RNA large subunit methyltransferase F, found in Pseudomonas aeruginosa (strain LESB58).